The sequence spans 60 residues: Prophage outer membrane lipoprotein RzoD (60 aa).

A signal peptide spans Met1–Gly19. Cys20 carries N-palmitoyl cysteine lipidation. Cys20 carries the S-diacylglycerol cysteine lipid modification.

Belongs to the lambdalikevirus o-spanin family. As to quaternary structure, homodimer; disulfide-linked. Interacts (via C-terminus) with RZ (via C-terminus). Part of the spanin complex which spans the entire periplasmic space. The spanin complex is composed of spanin, inner membrane subunit and spanin, outer membrane subunit.

It is found in the cell outer membrane. Its function is as follows. Component of the spanin complex that disrupts the outer membrane and causes cell lysis during virus exit. The spanin complex conducts the final step in cell lysis by disrupting the outer membrane after holin and endolysin action have permeabilized the inner membrane and degraded the host peptidoglycans. The polypeptide is Prophage outer membrane lipoprotein RzoD (rzoD) (Escherichia coli (strain K12)).